We begin with the raw amino-acid sequence, 442 residues long: NALCN channel auxiliary factor 2 (442 aa).

The helical transmembrane segment at 42–62 threads the bilayer; that stretch reads LASLLFFTVLLSNHLWLVSAG. N-linked (GlcNAc...) asparagine glycans are attached at residues Asn-77, Asn-100, Asn-171, Asn-279, and Asn-354. The chain crosses the membrane as a helical span at residues 406–426; sequence CVLVLMLLHTMASFSVVQNGV.

It belongs to the NALF family.

Its subcellular location is the membrane. In terms of biological role, probable component of the NALCN channel complex, a channel that regulates the resting membrane potential and controls neuronal excitability. The protein is NALCN channel auxiliary factor 2 (nalf2) of Xenopus tropicalis (Western clawed frog).